Reading from the N-terminus, the 38-residue chain is Potassium channel toxin alpha-KTx 2.15 (38 aa).

Intrachain disulfides connect Cys-7/Cys-29, Cys-13/Cys-34, and Cys-17/Cys-36.

It belongs to the short scorpion toxin superfamily. Potassium channel inhibitor family. Alpha-KTx 02 subfamily. As to expression, expressed by the venom gland.

It is found in the secreted. Blocks human voltage-gated potassium channels Kv1.2/KCNA2 (IC(50)=0.3 nM), Kv1.3/KCNA3 (IC(50)=8.3 nM) and Shaker IR (with inactivation domain removed) (IC(50)=12 nM) and blocks intermediate conductance calcium-activated potassium channel KCa3.1/KCNN4 (IC(50)=6.4 nM). The polypeptide is Potassium channel toxin alpha-KTx 2.15 (Centruroides tecomanus (Scorpion)).